Consider the following 435-residue polypeptide: Serine/threonine-protein kinase 40 (435 aa).

Residues 35–332 (FVLGPRLGNS…DVLEALSAII (298 aa)) form the Protein kinase domain. ATP is bound by residues 41–49 (LGNSPVPSI) and Lys-66. Asp-197 acts as the Proton acceptor in catalysis.

It belongs to the protein kinase superfamily. CAMK Ser/Thr protein kinase family.

It is found in the nucleus. Its subcellular location is the cytoplasm. It catalyses the reaction L-seryl-[protein] + ATP = O-phospho-L-seryl-[protein] + ADP + H(+). The catalysed reaction is L-threonyl-[protein] + ATP = O-phospho-L-threonyl-[protein] + ADP + H(+). In terms of biological role, may be a negative regulator of NF-kappa-B and p53-mediated gene transcription. This chain is Serine/threonine-protein kinase 40 (Stk40), found in Mus musculus (Mouse).